The following is a 475-amino-acid chain: Kynureninase (475 aa).

Pyridoxal 5'-phosphate is bound by residues leucine 141, threonine 142, 169–172 (FPSD), aspartate 254, histidine 257, and tyrosine 279. Lysine 280 carries the N6-(pyridoxal phosphate)lysine modification. Positions 319 and 347 each coordinate pyridoxal 5'-phosphate.

Belongs to the kynureninase family. In terms of assembly, homodimer. Pyridoxal 5'-phosphate is required as a cofactor.

It localises to the cytoplasm. It carries out the reaction L-kynurenine + H2O = anthranilate + L-alanine + H(+). The catalysed reaction is 3-hydroxy-L-kynurenine + H2O = 3-hydroxyanthranilate + L-alanine + H(+). It functions in the pathway amino-acid degradation; L-kynurenine degradation; L-alanine and anthranilate from L-kynurenine: step 1/1. Its pathway is cofactor biosynthesis; NAD(+) biosynthesis; quinolinate from L-kynurenine: step 2/3. Catalyzes the cleavage of L-kynurenine (L-Kyn) and L-3-hydroxykynurenine (L-3OHKyn) into anthranilic acid (AA) and 3-hydroxyanthranilic acid (3-OHAA), respectively. The sequence is that of Kynureninase (bna5) from Sclerotinia sclerotiorum (strain ATCC 18683 / 1980 / Ss-1) (White mold).